The chain runs to 296 residues: Mitochondrial arginine transporter BAC2 (296 aa).

Solcar repeat units follow at residues 13–93 (GREF…FSRS), 104–187 (PSYR…VRER), and 198–282 (ENLR…ALRC). Helical transmembrane passes span 16 to 36 (FVAG…LDTL), 70 to 90 (AAPL…YAIF), 110 to 130 (ALGG…VELI), 162 to 181 (GLTI…FWTY), 204 to 224 (LVAG…LDVV), and 260 to 280 (TAVA…EVAL).

It belongs to the mitochondrial carrier (TC 2.A.29) family. As to expression, high expression in flowers, stamens, petals and pollen. Expressed in roots, leaves and stems.

It localises to the mitochondrion inner membrane. With respect to regulation, inhibited by mercuric chloride. Its function is as follows. Mitochondrial arginine transporter that catalyzes the counter-exchange of arginine with lysine, ornithine, arginine, histidine and citrulline. Substrate preference in reconstituted proteoliposomes is arginine &gt; homoarginine &gt; citrulline &gt; histidine &gt; lysine &gt; ornithine. May be involved in the delivery of arginine, released from seed reserves, to mitochondrial arginase and the export of ornithine. May contribute to proline accumulation in response to hyperosmotic stress. In Arabidopsis thaliana (Mouse-ear cress), this protein is Mitochondrial arginine transporter BAC2 (BAC2).